The following is an 898-amino-acid chain: MRKGVLKDPEIADLFYKDDPEELFIGLHEIGHGSFGAVYFATNAHTSEVVAIKKMSYSGKQTHEKWQDILKEVKFLRQLKHPNTIEYKGCYLKEHTAWLVMEYCLGSASDLLEVHKKPLQEVEIAAITHGALHGLAYLHSHALIHRDIKAGNILLTEPGQVKLADFGSASMASPANSFVGTPYWMAPEVILAMDEGQYDGKVDIWSLGITCIELAERKPPLFNMNAMSALYHIAQNDSPTLQSNEWTDSFRRFVDYCLQKIPQERPTSAELLRHDFVRRDRPLRVLIDLIQRTKDAVRELDNLQYRKMKKILFQETRNGPLNESQEDEEDSEHGTSLNREMDSLGSNHSIPSMSVSTGSQSSSVNSMQEVMDESSSELVMMHDDESTINSSSSVVHKKDHVFIRDEAGHGDPRPEPRPTQSVQSQALHYRNRERFATIKSASLVTRQIHEHEQENELREQMSGYKRMRRQHQKQLIALENKLKAEMDEHRLKLQKEVETHANNSSIELEKLAKKQVAIIEKEAKVAAADEKKFQQQILAQQKKDLTTFLESQKKQYKICKEKIKEEMNEDHSTPKKEKQERISKHKENLQHTQAEEEAHLLTQQRLYYDKNCRFFKRKIMIKRHEVEQQNIREELNKKRTQKEMEHAMLIRHDESTRELEYRQLHTLQKLRMDLIRLQHQTELENQLEYNKRRERELHRKHVMELRQQPKNLKAMEMQIKKQFQDTCKVQTKQYKALKNHQLEVTPKNEHKTILKTLKDEQTRKLAILAEQYEQSINEMMASQALRLDEAQEAECQALRLQLQQEMELLNAYQSKIKMQTEAQHERELQKLEQRVSLRRAHLEQKIEEELAALQKERSERIKNLLERQEREIETFDMESLRMGFGNLVTLDFPKEDYR.

The 254-residue stretch at 24-277 (FIGLHEIGHG…SAELLRHDFV (254 aa)) folds into the Protein kinase domain. Residues 30-38 (IGHGSFGAV) and lysine 53 contribute to the ATP site. Residue aspartate 147 is the Proton acceptor of the active site. Disordered regions lie at residues 316 to 362 (TRNG…SQSS) and 405 to 425 (DEAG…VQSQ). The residue at position 324 (serine 324) is a Phosphoserine; by ATM. A phosphoserine mark is found at serine 331, serine 343, serine 346, and serine 349. The span at 334-351 (GTSLNREMDSLGSNHSIP) shows a compositional bias: polar residues. Residues 352 to 362 (SMSVSTGSQSS) show a composition bias toward low complexity. Threonine 357 carries the post-translational modification Phosphothreonine. At serine 359 the chain carries Phosphoserine. The segment covering 405–416 (DEAGHGDPRPEP) has biased composition (basic and acidic residues). Serine 442 bears the Phosphoserine mark. Coiled-coil stretches lie at residues 452-502 (EQEN…THAN), 548-649 (FLES…HAML), and 754-879 (LKTL…DMES). The disordered stretch occupies residues 565 to 596 (EEMNEDHSTPKKEKQERISKHKENLQHTQAEE). Lysine 830 carries the post-translational modification N6-acetyllysine.

It belongs to the protein kinase superfamily. STE Ser/Thr protein kinase family. STE20 subfamily. Self-associates. Interacts with ERN1 and TRAF2. Interaction with TRAF2 is facilitated under ER stress conditions, such as treatment with tunicamycin, and may promote TRAF2 phosphorylation. Interacts (via N-terminus) with STK25; the interaction promotes STK25 abundance at the level of protein expression and/or stability. In terms of assembly, (Microbial infection) Interacts with herpes simplex virus 1 UL37 protein. In terms of processing, autophosphorylated. Phosphorylation at Ser-324 by ATM following DNA damage is required for activation of the p38/MAPK14 stress-activated MAPK cascade. Phosphorylated at Ser-324 and on Tyr residues during T cell activation. Phosphorylated by LRRK2. Ubiquitously expressed at a low level, and highly expressed in peripheral blood leukocytes (PBLs), thymus, spleen, kidney, skeletal muscle, heart and liver.

Its subcellular location is the cytoplasm. The protein resides in the cell membrane. The protein localises to the membrane raft. It localises to the lipid droplet. The catalysed reaction is L-seryl-[protein] + ATP = O-phospho-L-seryl-[protein] + ADP + H(+). The enzyme catalyses L-threonyl-[protein] + ATP = O-phospho-L-threonyl-[protein] + ADP + H(+). Its function is as follows. Serine/threonine-protein kinase that acts as a regulator of the p38/MAPK14 stress-activated MAPK cascade and of the MAPK8/JNK cascade. In response to DNA damage, involved in the G2/M transition DNA damage checkpoint by activating the p38/MAPK14 stress-activated MAPK cascade, probably by mediating phosphorylation of upstream MAP2K3 and MAP2K6 kinases. Inhibits basal activity of the MAPK8/JNK cascade and diminishes its activation in response to epidermal growth factor (EGF). Positively regulates canonical T cell receptor (TCR) signaling by preventing early PTPN6/SHP1-mediated inactivation of LCK, ensuring sustained TCR signaling that is required for optimal activation and differentiation of T cells. Phosphorylates PTPN6/SHP1 on 'Thr-394', leading to its polyubiquitination and subsequent proteasomal degradation. Required for cell surface expression of metalloprotease ADAM10 on type 1 transitional B cells which is necessary for their NOTCH-mediated development into marginal zone B cells. Also required for the NOTCH-mediated terminal differentiation of splenic conventional type 2 dendritic cells. Positively regulates osteoblast differentiation by acting as an upstream activator of the JNK pathway. Promotes JNK signaling in hepatocytes and positively regulates hepatocyte lipid storage by inhibiting beta-oxidation and triacylglycerol secretion while enhancing lipid synthesis. Restricts age-associated inflammation by negatively regulating differentiation of macrophages and their production of pro-inflammatory cytokines. Plays a role in negatively regulating the abundance of regulatory T cells in white adipose tissue. The sequence is that of Serine/threonine-protein kinase TAO3 (TAOK3) from Homo sapiens (Human).